A 224-amino-acid chain; its full sequence is Ribose-5-phosphate isomerase A (224 aa).

Residues 26–29 (TGST), 82–85 (DGAD), and 95–98 (KGGG) contribute to the substrate site. Glu104 (proton acceptor) is an active-site residue. Lys122 is a binding site for substrate.

Belongs to the ribose 5-phosphate isomerase family. In terms of assembly, homodimer.

The catalysed reaction is aldehydo-D-ribose 5-phosphate = D-ribulose 5-phosphate. The protein operates within carbohydrate degradation; pentose phosphate pathway; D-ribose 5-phosphate from D-ribulose 5-phosphate (non-oxidative stage): step 1/1. Catalyzes the reversible conversion of ribose-5-phosphate to ribulose 5-phosphate. In Streptococcus suis (strain 98HAH33), this protein is Ribose-5-phosphate isomerase A.